We begin with the raw amino-acid sequence, 120 residues long: Seripauperin-6 (120 aa).

The N-terminal stretch at 1-20 (MVKLTSIAAGVAAIAATASA) is a signal peptide.

Belongs to the SRP1/TIP1 family. Seripauperin subfamily.

The chain is Seripauperin-6 (PAU6) from Saccharomyces cerevisiae (strain ATCC 204508 / S288c) (Baker's yeast).